A 472-amino-acid polypeptide reads, in one-letter code: Probable glycine dehydrogenase (decarboxylating) subunit 2 (472 aa).

Residue Lys-268 is modified to N6-(pyridoxal phosphate)lysine.

It belongs to the GcvP family. C-terminal subunit subfamily. The glycine cleavage system is composed of four proteins: P, T, L and H. In this organism, the P 'protein' is a heterodimer of two subunits. The cofactor is pyridoxal 5'-phosphate.

The catalysed reaction is N(6)-[(R)-lipoyl]-L-lysyl-[glycine-cleavage complex H protein] + glycine + H(+) = N(6)-[(R)-S(8)-aminomethyldihydrolipoyl]-L-lysyl-[glycine-cleavage complex H protein] + CO2. The glycine cleavage system catalyzes the degradation of glycine. The P protein binds the alpha-amino group of glycine through its pyridoxal phosphate cofactor; CO(2) is released and the remaining methylamine moiety is then transferred to the lipoamide cofactor of the H protein. The chain is Probable glycine dehydrogenase (decarboxylating) subunit 2 from Thermoplasma volcanium (strain ATCC 51530 / DSM 4299 / JCM 9571 / NBRC 15438 / GSS1).